Reading from the N-terminus, the 510-residue chain is NAD(P)H-quinone oxidoreductase subunit 2, chloroplastic (510 aa).

13 helical membrane passes run 24-44 (LLLF…GLIL), 59-79 (WFYF…LFRW), 99-119 (IFQF…VEYI), 124-144 (MAIT…MFLC), 149-169 (XITI…LSGY), 183-203 (YLLM…WLYG), 229-249 (ISIA…PAPF), 295-315 (WHLL…LIAI), 323-343 (MLAY…IVGD), 347-367 (GYAS…GTFA), 395-415 (ALSS…AGFF), 418-438 (LHLF…IGLL), and 484-504 (MTVC…ILAI).

This sequence belongs to the complex I subunit 2 family. In terms of assembly, NDH is composed of at least 16 different subunits, 5 of which are encoded in the nucleus.

Its subcellular location is the plastid. The protein localises to the chloroplast thylakoid membrane. The enzyme catalyses a plastoquinone + NADH + (n+1) H(+)(in) = a plastoquinol + NAD(+) + n H(+)(out). The catalysed reaction is a plastoquinone + NADPH + (n+1) H(+)(in) = a plastoquinol + NADP(+) + n H(+)(out). In terms of biological role, NDH shuttles electrons from NAD(P)H:plastoquinone, via FMN and iron-sulfur (Fe-S) centers, to quinones in the photosynthetic chain and possibly in a chloroplast respiratory chain. The immediate electron acceptor for the enzyme in this species is believed to be plastoquinone. Couples the redox reaction to proton translocation, and thus conserves the redox energy in a proton gradient. This is NAD(P)H-quinone oxidoreductase subunit 2, chloroplastic from Narcissus elegans (Daffodil).